We begin with the raw amino-acid sequence, 865 residues long: Alanine--tRNA ligase (865 aa).

4 residues coordinate Zn(2+): H554, H558, C656, and H660.

Belongs to the class-II aminoacyl-tRNA synthetase family. The cofactor is Zn(2+).

Its subcellular location is the cytoplasm. It carries out the reaction tRNA(Ala) + L-alanine + ATP = L-alanyl-tRNA(Ala) + AMP + diphosphate. Catalyzes the attachment of alanine to tRNA(Ala) in a two-step reaction: alanine is first activated by ATP to form Ala-AMP and then transferred to the acceptor end of tRNA(Ala). Also edits incorrectly charged Ser-tRNA(Ala) and Gly-tRNA(Ala) via its editing domain. The sequence is that of Alanine--tRNA ligase from Francisella tularensis subsp. holarctica (strain LVS).